The following is a 411-amino-acid chain: Argininosuccinate synthase (411 aa).

Residues 11 to 19 and Ala37 each bind ATP; that span reads AYSGGLDTS. 2 residues coordinate L-citrulline: Tyr88 and Ser93. An ATP-binding site is contributed by 116–124; the sequence is SHGATGKGN. Positions 120, 124, and 125 each coordinate L-aspartate. An L-citrulline-binding site is contributed by Asn124. Arg128, Ser181, Ser190, Glu271, and Tyr283 together coordinate L-citrulline.

Belongs to the argininosuccinate synthase family. In terms of assembly, homotetramer.

The protein resides in the cytoplasm. Its subcellular location is the cytosol. It catalyses the reaction L-citrulline + L-aspartate + ATP = 2-(N(omega)-L-arginino)succinate + AMP + diphosphate + H(+). It participates in amino-acid biosynthesis; L-arginine biosynthesis; L-arginine from L-ornithine and carbamoyl phosphate: step 2/3. The protein operates within nitrogen metabolism; urea cycle; (N(omega)-L-arginino)succinate from L-aspartate and L-citrulline: step 1/1. In terms of biological role, one of the enzymes of the urea cycle, the metabolic pathway transforming neurotoxic amonia produced by protein catabolism into inocuous urea in the liver of ureotelic animals. Catalyzes the formation of arginosuccinate from aspartate, citrulline and ATP and together with ASL it is responsible for the biosynthesis of arginine in most body tissues. This is Argininosuccinate synthase from Xenopus laevis (African clawed frog).